Reading from the N-terminus, the 208-residue chain is Orotidine 5'-phosphate decarboxylase (208 aa).

Residues D7, K29, 57–66 (DLKLADIPNT), S109, 162–172 (PGIGAQGGKAK), G185, and R186 each bind substrate. The active-site Proton donor is the K59.

This sequence belongs to the OMP decarboxylase family. Type 1 subfamily. In terms of assembly, homodimer.

It carries out the reaction orotidine 5'-phosphate + H(+) = UMP + CO2. It participates in pyrimidine metabolism; UMP biosynthesis via de novo pathway; UMP from orotate: step 2/2. Functionally, catalyzes the decarboxylation of orotidine 5'-monophosphate (OMP) to uridine 5'-monophosphate (UMP). In Pyrococcus abyssi (strain GE5 / Orsay), this protein is Orotidine 5'-phosphate decarboxylase.